Consider the following 505-residue polypeptide: Membrane-bound O-acyltransferase GUP1 (505 aa).

Residues 1–217 (MFKAAMDASN…VAPIPLTDYN (217 aa)) lie on the Extracellular side of the membrane. A helical membrane pass occupies residues 218–238 (FVNYMAYITYAPLFIAGPIIT). The Cytoplasmic portion of the chain corresponds to 239–266 (FNDYIYQSDYKAMSSVKDYKRTFIYFLR). The chain crosses the membrane as a helical span at residues 267 to 287 (FAFCILVMEFLLHFMYVVAVS). The Extracellular segment spans residues 288-296 (KTKAWEGDT). The helical transmembrane segment at 297 to 317 (PFQLSMLGLFNLNIIWLKLLI) threads the bilayer. Residues 318–377 (PWRLFRLWSLIDGIDPPENMIRCMDNNFSTLAFWRAWHRSYNRWIIRYIYIPLGGGGKYR) lie on the Cytoplasmic side of the membrane. 2 consecutive transmembrane segments (helical) span residues 378 to 398 (ILNSLCVFSFVAIWHDIELKL) and 399 to 419 (LMWGWLVVIFIIPELAATAIF). Histidine 392 is a catalytic residue. Over 420-430 (KNYQHEPWYRH) the chain is Cytoplasmic. The helical transmembrane segment at 431–451 (VCALGAVINIWMMMLANLFGF) threads the bilayer. Over 452–464 (CMGKDGTMSLIKT) the chain is Extracellular. A helical membrane pass occupies residues 465 to 485 (LFTTAVGLRFLFLSLGALFVG). Residues 486–505 (SQVMFELREAEKRRGVNVKC) are Cytoplasmic-facing.

Belongs to the membrane-bound acyltransferase family.

It is found in the cell membrane. The protein resides in the endoplasmic reticulum membrane. Its subcellular location is the mitochondrion membrane. In terms of biological role, membrane-bound O-acyltransferase involved in the remodeling of glycosylphosphatidylinositol (GPI) anchors. Acts only on GPI-anchored proteins, but not on free GPI lipids. Also involved in lipid metabolism, having profound effects on sphingolipid-sterol-ordered domains integrity and assembly. Involved in cell integrity and apoptosis. This Millerozyma farinosa (Yeast) protein is Membrane-bound O-acyltransferase GUP1 (GUP1).